Consider the following 214-residue polypeptide: NADH-quinone oxidoreductase subunit C (214 aa).

It belongs to the complex I 30 kDa subunit family. NDH-1 is composed of 14 different subunits. Subunits NuoB, C, D, E, F, and G constitute the peripheral sector of the complex.

The protein localises to the cell inner membrane. It carries out the reaction a quinone + NADH + 5 H(+)(in) = a quinol + NAD(+) + 4 H(+)(out). Its function is as follows. NDH-1 shuttles electrons from NADH, via FMN and iron-sulfur (Fe-S) centers, to quinones in the respiratory chain. The immediate electron acceptor for the enzyme in this species is believed to be ubiquinone. Couples the redox reaction to proton translocation (for every two electrons transferred, four hydrogen ions are translocated across the cytoplasmic membrane), and thus conserves the redox energy in a proton gradient. The protein is NADH-quinone oxidoreductase subunit C of Francisella tularensis subsp. novicida (strain U112).